We begin with the raw amino-acid sequence, 3996 residues long: Probable E3 ubiquitin-protein ligase HECTD4 (3996 aa).

Residues 282–302 traverse the membrane as a helical segment; the sequence is TCIIRCILVVFQVVFKFFFSP. Polar residues predominate over residues 1494 to 1510; the sequence is PTASEPDTTLTKTSPKN. Disordered regions lie at residues 1494–1524 and 1616–1637; these read PTASEPDTTLTKTSPKNSLKGDKDPGEESEA and PETVSGLSTGDKKKTAQTSICR. Threonine 2080 carries the post-translational modification Phosphothreonine. Disordered regions lie at residues 2219-2245, 2859-2919, 3017-3053, and 3327-3403; these read FITSGPDPHPPPIADDESDDDDDDDIP, TSAT…PTVL, EDTKKPKDKAEGGDGKVEPEKTLAFPGTDSMEVSTSS, and FDKS…QEVP. The segment covering 2232–2245 has biased composition (acidic residues); that stretch reads ADDESDDDDDDDIP. A compositionally biased stretch (low complexity) spans 2866–2887; that stretch reads LSDSSSSSSSSPGQTPQSPSLL. The segment covering 2888 to 2897 has biased composition (basic residues); it reads SKRKKVKMKR. Basic and acidic residues-rich tracts occupy residues 3017-3037, 3327-3341, and 3370-3403; these read EDTKKPKDKAEGGDGKVEPEK, FDKSKYSKAGKEQHP, and LSEKKPTVKPKSPEKSKPDEKDPEKSPTKKQEVP. Residues 3627–3996 form the HECT domain; the sequence is SGGDPTYAFN…IHYREDPLSG (370 aa). The active-site Glycyl thioester intermediate is the cysteine 3964.

Its subcellular location is the membrane. The catalysed reaction is S-ubiquitinyl-[E2 ubiquitin-conjugating enzyme]-L-cysteine + [acceptor protein]-L-lysine = [E2 ubiquitin-conjugating enzyme]-L-cysteine + N(6)-ubiquitinyl-[acceptor protein]-L-lysine.. It participates in protein modification; protein ubiquitination. Its function is as follows. E3 ubiquitin-protein ligase which accepts ubiquitin from an E2 ubiquitin-conjugating enzyme in the form of a thioester and then directly transfers the ubiquitin to targeted substrates. This Homo sapiens (Human) protein is Probable E3 ubiquitin-protein ligase HECTD4 (HECTD4).